We begin with the raw amino-acid sequence, 129 residues long: Short-chain dehydrogenase/reductase homolog YusR (129 aa).

Belongs to the short-chain dehydrogenases/reductases (SDR) family.

The sequence is that of Short-chain dehydrogenase/reductase homolog YusR (yusR) from Bacillus subtilis (strain 168).